A 370-amino-acid polypeptide reads, in one-letter code: Aspartate-semialdehyde dehydrogenase (370 aa).

NADP(+) contacts are provided by residues Arg-10 to Val-13, Thr-37 to Ser-38, and Gln-73. Residue Arg-102 coordinates phosphate. Catalysis depends on Cys-135, which acts as the Acyl-thioester intermediate. Residue Gln-162 participates in substrate binding. Residues Ser-165–Gly-166 and Pro-193 contribute to the NADP(+) site. Glu-241 contributes to the substrate binding site. Lys-244 contacts phosphate. Arg-268 lines the substrate pocket. His-275 (proton acceptor) is an active-site residue. NADP(+) is bound at residue Gln-351.

The protein belongs to the aspartate-semialdehyde dehydrogenase family. Homodimer.

The enzyme catalyses L-aspartate 4-semialdehyde + phosphate + NADP(+) = 4-phospho-L-aspartate + NADPH + H(+). The protein operates within amino-acid biosynthesis; L-lysine biosynthesis via DAP pathway; (S)-tetrahydrodipicolinate from L-aspartate: step 2/4. Its pathway is amino-acid biosynthesis; L-methionine biosynthesis via de novo pathway; L-homoserine from L-aspartate: step 2/3. It functions in the pathway amino-acid biosynthesis; L-threonine biosynthesis; L-threonine from L-aspartate: step 2/5. Functionally, catalyzes the NADPH-dependent formation of L-aspartate-semialdehyde (L-ASA) by the reductive dephosphorylation of L-aspartyl-4-phosphate. The polypeptide is Aspartate-semialdehyde dehydrogenase (asd) (Pseudomonas aeruginosa (strain ATCC 15692 / DSM 22644 / CIP 104116 / JCM 14847 / LMG 12228 / 1C / PRS 101 / PAO1)).